The following is an 87-amino-acid chain: Small ribosomal subunit protein bS20 (87 aa).

Basic residues predominate over residues 1–19 (MANHKSALKRHRQSIKRNL). The disordered stretch occupies residues 1 to 22 (MANHKSALKRHRQSIKRNLRNN).

The protein belongs to the bacterial ribosomal protein bS20 family.

Functionally, binds directly to 16S ribosomal RNA. This Maridesulfovibrio salexigens (strain ATCC 14822 / DSM 2638 / NCIMB 8403 / VKM B-1763) (Desulfovibrio salexigens) protein is Small ribosomal subunit protein bS20.